Reading from the N-terminus, the 217-residue chain is Large ribosomal subunit protein uL4 (217 aa).

The tract at residues 42–100 (RAAARQGTHSTKTRGDVSGGGRKPYRQKGTGRARQGSTRAPQFTGGGVVHGPKPRDYSQ) is disordered.

The protein belongs to the universal ribosomal protein uL4 family. In terms of assembly, part of the 50S ribosomal subunit.

Its function is as follows. One of the primary rRNA binding proteins, this protein initially binds near the 5'-end of the 23S rRNA. It is important during the early stages of 50S assembly. It makes multiple contacts with different domains of the 23S rRNA in the assembled 50S subunit and ribosome. Functionally, forms part of the polypeptide exit tunnel. In Mycolicibacterium paratuberculosis (strain ATCC BAA-968 / K-10) (Mycobacterium paratuberculosis), this protein is Large ribosomal subunit protein uL4.